The primary structure comprises 566 residues: MKQSMVFSPTLREVPADAEIKSHQLLLRAGFMRQNASGIYSFLPFGLKVLHKVERIVREEMERAGAVELLMPAMQAAELWQESGRWYSYGSELMRMKDRNAREFALGATHEEVITDLVRDEVKSYKKLPLTLYQIQTKFRDEQRPRFGLLRGREFLMKDAYSFHATQESLDEVYDRLYKAYSNIFARCGLNFRAVIADSGAMGGKDTHEFMVLSDVGEDTIAYSDTSDYAANIEMAPVVATYTKSDEAEKELEKVATPDQKAIEEVSAFLNIEADKCIKSMVFKVDEKLVVVLVRGDHEVNDVKVKNVYGASVVELASHEEVKELLNCEVGSLGPIGVNGDIEIIADHAVASIVNGCSGANEEGFHYVNVNPERDFKVSQYTDLRFIQEGDQSPDGNGTILFARGIEVGHVFKLGTRYSEAMNATFLDENGKTQPLIMGCYGIGVSRTVAAIAEQFNDENGLVWPKAVAPFHVHVIPVNMKSDAQREMGENIYNSLQEQGYEVLLDDRAERAGVKFADADLFGLPVRVTVGKKADEGIVEVKVRATGESEEVKVEELQTYIANILK.

It belongs to the class-II aminoacyl-tRNA synthetase family. ProS type 1 subfamily. Homodimer.

The protein resides in the cytoplasm. The enzyme catalyses tRNA(Pro) + L-proline + ATP = L-prolyl-tRNA(Pro) + AMP + diphosphate. Its function is as follows. Catalyzes the attachment of proline to tRNA(Pro) in a two-step reaction: proline is first activated by ATP to form Pro-AMP and then transferred to the acceptor end of tRNA(Pro). As ProRS can inadvertently accommodate and process non-cognate amino acids such as alanine and cysteine, to avoid such errors it has two additional distinct editing activities against alanine. One activity is designated as 'pretransfer' editing and involves the tRNA(Pro)-independent hydrolysis of activated Ala-AMP. The other activity is designated 'posttransfer' editing and involves deacylation of mischarged Ala-tRNA(Pro). The misacylated Cys-tRNA(Pro) is not edited by ProRS. The chain is Proline--tRNA ligase from Bacillus anthracis (strain A0248).